Reading from the N-terminus, the 101-residue chain is MKPNFSKGLLPAVVIEEGTKEVLMLAYMNEEAYEKTLKTKRTWFYSRSRRSLWNKGETSGHVQHVQSLYLDCDQDAIVVFVKQVGPACHTGEKTCFHYKII.

Asp-71 is a binding site for Mg(2+). Cys-72 provides a ligand contact to Zn(2+). Mg(2+) contacts are provided by Asp-73 and Asp-75. Zn(2+) contacts are provided by Cys-88 and Cys-95.

This sequence belongs to the PRA-CH family. As to quaternary structure, homodimer. Mg(2+) is required as a cofactor. Requires Zn(2+) as cofactor.

It localises to the cytoplasm. It carries out the reaction 1-(5-phospho-beta-D-ribosyl)-5'-AMP + H2O = 1-(5-phospho-beta-D-ribosyl)-5-[(5-phospho-beta-D-ribosylamino)methylideneamino]imidazole-4-carboxamide. It participates in amino-acid biosynthesis; L-histidine biosynthesis; L-histidine from 5-phospho-alpha-D-ribose 1-diphosphate: step 3/9. Its function is as follows. Catalyzes the hydrolysis of the adenine ring of phosphoribosyl-AMP. The protein is Phosphoribosyl-AMP cyclohydrolase of Bacillus cereus (strain AH820).